We begin with the raw amino-acid sequence, 118 residues long: Large ribosomal subunit protein bL20 (118 aa).

It belongs to the bacterial ribosomal protein bL20 family.

Binds directly to 23S ribosomal RNA and is necessary for the in vitro assembly process of the 50S ribosomal subunit. It is not involved in the protein synthesizing functions of that subunit. This Staphylococcus carnosus (strain TM300) protein is Large ribosomal subunit protein bL20.